The chain runs to 93 residues: Large ribosomal subunit protein bL31B (93 aa).

Belongs to the bacterial ribosomal protein bL31 family. Type B subfamily. As to quaternary structure, part of the 50S ribosomal subunit.

This is Large ribosomal subunit protein bL31B from Psychrobacter cryohalolentis (strain ATCC BAA-1226 / DSM 17306 / VKM B-2378 / K5).